The primary structure comprises 132 residues: Translation initiation factor 2 subunit beta (132 aa).

The interval 1 to 30 (MDYEEQLDRAMDEKPDVTGSETRFEVPDPN) is disordered.

Belongs to the eIF-2-beta/eIF-5 family. As to quaternary structure, heterotrimer composed of an alpha, a beta and a gamma chain.

Functionally, eIF-2 functions in the early steps of protein synthesis by forming a ternary complex with GTP and initiator tRNA. This chain is Translation initiation factor 2 subunit beta, found in Halobacterium salinarum (strain ATCC 29341 / DSM 671 / R1).